Here is a 744-residue protein sequence, read N- to C-terminus: Tripartite motif-containing protein 2 (744 aa).

A Phosphoserine modification is found at serine 10. The RING-type zinc-finger motif lies at 23–64 (CSICLERYKNPKVLPCLHTFCERCLQNYIPAHSLTLSCPVCR). The B box-type zinc-finger motif lies at 113–154 (GKPLSCPNHDGNVMDFYCQSCETAMCRECTEGEHAEHPTVPL). 4 residues coordinate Zn(2+): cysteine 118, histidine 121, cysteine 141, and histidine 146. A Filamin repeat occupies 320–421 (TTNAVASETV…IRGSPFKLKV (102 aa)). Residue threonine 371 is modified to Phosphothreonine. Serine 375, serine 424, and serine 428 each carry phosphoserine. Residues 432–462 (EGVKRRVKSPGSGHVKQKAVKRPASMYSTGK) are disordered. 6 NHL repeats span residues 473–516 (IFRV…FSND), 520–563 (KSRF…FSSD), 564–605 (GKFK…FQPN), 609–652 (VTRF…FNQE), 656–699 (MLKF…FDGS), and 700–743 (GSFL…YRYL).

The protein belongs to the TRIM/RBCC family. As to quaternary structure, forms homooligomers. Interacts with TRIM3; this interaction reduces TRIM2 activity. Interacts with myosin V; myosin V may not be a substrate for ubiquitination. Interacts with NEFL. Interacts with phosphorylated BCL2L11. Interacts with SIRPA. Post-translationally, RING-type zinc finger-dependent and UBE2D1-dependent autoubiquitination.

The protein localises to the cytoplasm. It catalyses the reaction S-ubiquitinyl-[E2 ubiquitin-conjugating enzyme]-L-cysteine + [acceptor protein]-L-lysine = [E2 ubiquitin-conjugating enzyme]-L-cysteine + N(6)-ubiquitinyl-[acceptor protein]-L-lysine.. It participates in protein modification; protein ubiquitination. UBE2D1-dependent E3 ubiquitin-protein ligase that mediates the ubiquitination of NEFL and of phosphorylated BCL2L11. Plays a neuroprotective function. May play a role in neuronal rapid ischemic tolerance. Plays a role in antiviral immunity and limits New World arenavirus infection independently of its ubiquitin ligase activity. This Bos taurus (Bovine) protein is Tripartite motif-containing protein 2 (TRIM2).